The following is a 328-amino-acid chain: Spermatogenesis- and oogenesis-specific basic helix-loop-helix-containing protein 1 (328 aa).

The 52-residue stretch at 53 to 104 (SCLRRNVISERERRKRMSLSCERLRALLPQFDGRREDMASVLEMSVQFLRLA) folds into the bHLH domain. The disordered stretch occupies residues 290–328 (EAGSALGSDVDDGTSFLLTAGPSSWPGEWGPGFRAGPPA). Residues 310 to 321 (GPSSWPGEWGPG) show a composition bias toward low complexity.

As to quaternary structure, forms both hetero- and homodimers with SOHLH2.

Its subcellular location is the cytoplasm. It localises to the nucleus. Functionally, transcription regulator of both male and female germline differentiation. Suppresses genes involved in spermatogonial stem cells maintenance, and induces genes important for spermatogonial differentiation. Coordinates oocyte differentiation without affecting meiosis I. This Homo sapiens (Human) protein is Spermatogenesis- and oogenesis-specific basic helix-loop-helix-containing protein 1 (SOHLH1).